Here is a 138-residue protein sequence, read N- to C-terminus: Large ribosomal subunit protein uL16c (138 aa).

It belongs to the universal ribosomal protein uL16 family. As to quaternary structure, part of the 50S ribosomal subunit.

The protein localises to the plastid. Its subcellular location is the chloroplast. The sequence is that of Large ribosomal subunit protein uL16c from Chaetosphaeridium globosum (Charophycean green alga).